The chain runs to 432 residues: Adenylosuccinate synthetase (432 aa).

Residues 13–19 and 41–43 contribute to the GTP site; these read GDEGKGK and GHT. Asp14 (proton acceptor) is an active-site residue. The Mg(2+) site is built by Asp14 and Gly41. IMP is bound by residues 14–17, 39–42, Thr130, Arg144, Gln225, Thr240, and Arg304; these read DEGK and NAGH. His42 acts as the Proton donor in catalysis. 300-306 provides a ligand contact to substrate; that stretch reads AVTGRPR. GTP contacts are provided by residues Arg306, 332–334, and 415–417; these read KLD and STG.

Belongs to the adenylosuccinate synthetase family. In terms of assembly, homodimer. Mg(2+) is required as a cofactor.

It localises to the cytoplasm. The catalysed reaction is IMP + L-aspartate + GTP = N(6)-(1,2-dicarboxyethyl)-AMP + GDP + phosphate + 2 H(+). Its pathway is purine metabolism; AMP biosynthesis via de novo pathway; AMP from IMP: step 1/2. Its function is as follows. Plays an important role in the de novo pathway of purine nucleotide biosynthesis. Catalyzes the first committed step in the biosynthesis of AMP from IMP. In Haemophilus ducreyi (strain 35000HP / ATCC 700724), this protein is Adenylosuccinate synthetase.